Here is a 428-residue protein sequence, read N- to C-terminus: Endoplasmic reticulum junction formation protein lunapark (428 aa).

Gly-2 carries the N-myristoyl glycine lipid modification. At 2–45 the chain is on the cytoplasmic side; the sequence is GGLFSRWRTKLSTVEVLESIDKEIQALEEFREKNQRLQKLRVGR. A coiled-coil region spans residues 16–43; it reads EVLESIDKEIQALEEFREKNQRLQKLRV. A helical transmembrane segment spans residues 46–66; that stretch reads LILYSSVLYLFTCLIVYLWYL. At 67 to 77 the chain is on the lumenal side; sequence PDEFTARLAMT. A helical transmembrane segment spans residues 78 to 98; sequence LPFFAFPLIIWSIRTVIIFFF. Residues 99–428 lie on the Cytoplasmic side of the membrane; it reads SKRTERNNEA…ELNGESLTAE (330 aa). Positions 102-128 form a coiled coil; it reads TERNNEALDDLKSQRKKILEEVMEKET. Phosphoserine occurs at positions 114, 153, 177, 182, and 194. The segment at 143-248 is disordered; the sequence is SKKAKECEPP…PPGPPLARPI (106 aa). Positions 185 to 198 are enriched in pro residues; the sequence is QGPPPQVPVSPGPP. 2 positions are modified to phosphothreonine: Thr-211 and Thr-213. Phosphoserine occurs at positions 217 and 227. The C4-type; plays a role in ER morphology zinc finger occupies 276 to 301; that stretch reads CQQCFSHNGMALKEEFEYIAFRCAYC. Phosphoserine is present on residues Ser-321, Ser-353, and Ser-384. Positions 361 to 428 are disordered; sequence NNTEQTDDKI…ELNGESLTAE (68 aa). Over residues 386 to 401 the composition is skewed to acidic residues; sequence SEEPEEKQETENEEAS. Residue Ser-414 is modified to Phosphoserine.

The protein belongs to the lunapark family. In terms of assembly, homodimer; homodimerization requires the C4-type zinc finger motif and decreases during mitosis in a phosphorylation-dependent manner. Post-translationally, myristoylated; myristoylation is necessary for the endoplasmic reticulum (ER) three-way ER tubular junction formation, but is not required neither for membrane translocation, membrane topology formation, nor for the specific localization to ER membranes. In terms of processing, phosphorylated. Phosphorylation occurs at Ser-177, Ser-182, Ser-217, Ser-227, Ser-321 and Ser-384 during interphase. Phosphorylation occurs at Ser-114, Ser-153, Ser-194, Thr-211 and Ser-353 during mitosis; these phosphorylations reduce both its homodimerization and the ER three-way tubular junction formation. Subject to proteasomal degradation following phosphorylation during mitosis.

The protein localises to the endoplasmic reticulum membrane. Endoplasmic reticulum (ER)-shaping membrane protein that plays a role in determining ER morphology. Involved in the stabilization of nascent three-way ER tubular junctions within the ER network. May also play a role as a curvature-stabilizing protein within three-way ER tubular junction network. May be involved in limb and central nervous system development. This is Endoplasmic reticulum junction formation protein lunapark from Pongo abelii (Sumatran orangutan).